The chain runs to 432 residues: UDP-glucosyltransferase B1 (432 aa).

It belongs to the UDP-glycosyltransferase family.

The catalysed reaction is (9Z)-17-hydroxyoctadec-9-enoate 17-O-beta-D-glucoside + UDP-alpha-D-glucose = (9Z)-17-hydroxyoctadec-9-enoate 17-O-sophoroside + UDP + H(+). In terms of biological role, catalyzes the second glycosylation step of sophorolipid biosynthesis, the further glucosylation of the previoulsy formed glucolipid to give rise to an acidic sophorolipid. In Starmerella bombicola (Yeast), this protein is UDP-glucosyltransferase B1.